Reading from the N-terminus, the 217-residue chain is Small ribosomal subunit protein uS3 (217 aa).

The KH type-2 domain maps to I38 to K106.

Belongs to the universal ribosomal protein uS3 family. As to quaternary structure, part of the 30S ribosomal subunit. Forms a tight complex with proteins S10 and S14.

Its function is as follows. Binds the lower part of the 30S subunit head. Binds mRNA in the 70S ribosome, positioning it for translation. The protein is Small ribosomal subunit protein uS3 of Streptococcus uberis (strain ATCC BAA-854 / 0140J).